The sequence spans 346 residues: Phosphoribosylformylglycinamidine cyclo-ligase (346 aa).

The protein belongs to the AIR synthase family.

It is found in the cytoplasm. It carries out the reaction 2-formamido-N(1)-(5-O-phospho-beta-D-ribosyl)acetamidine + ATP = 5-amino-1-(5-phospho-beta-D-ribosyl)imidazole + ADP + phosphate + H(+). It functions in the pathway purine metabolism; IMP biosynthesis via de novo pathway; 5-amino-1-(5-phospho-D-ribosyl)imidazole from N(2)-formyl-N(1)-(5-phospho-D-ribosyl)glycinamide: step 2/2. In Methylobacillus flagellatus (strain ATCC 51484 / DSM 6875 / VKM B-1610 / KT), this protein is Phosphoribosylformylglycinamidine cyclo-ligase.